A 251-amino-acid chain; its full sequence is 16S rRNA (guanine(1405)-N(7))-methyltransferase (251 aa).

S-adenosyl-L-methionine is bound by residues Y56, 81-83, R87, A111, D131, 157-158, F173, and E182; these read HAS and DV.

Belongs to the methyltransferase superfamily. Aminoglycoside resistance family.

The catalysed reaction is guanosine(1405) in 16S rRNA + S-adenosyl-L-methionine = N(7)-methylguanosine(1405) in 16S rRNA + S-adenosyl-L-homocysteine. Its function is as follows. Specifically methylates the N(7) position of guanine 1405 in 16S rRNA. Confers resistance to various aminoglycosides, including kanamycin, tobramycin, amikacin, arbekacin, gentamicin, sisomicin and isepamicin. The protein is 16S rRNA (guanine(1405)-N(7))-methyltransferase (rmtB) of Serratia marcescens.